Consider the following 58-residue polypeptide: MKRQKRDRFERAHTQGFKAGLHGRSKDNCPYQTQDDFRSHWLGGWRDAMEARNTGLFR.

The segment at Met-1–Asn-28 is disordered.

Belongs to the ribosome modulation factor family.

Its subcellular location is the cytoplasm. Its function is as follows. During stationary phase, converts 70S ribosomes to an inactive dimeric form (100S ribosomes). This is Ribosome modulation factor from Idiomarina loihiensis (strain ATCC BAA-735 / DSM 15497 / L2-TR).